The chain runs to 312 residues: tRNA-dihydrouridine(16) synthase (312 aa).

Residues 7-9 and Gln68 contribute to the FMN site; that span reads PMQ. Cys98 functions as the Proton donor in the catalytic mechanism. Residues Lys139, 200–202, and 224–225 each bind FMN; these read NGE and GR.

Belongs to the Dus family. DusC subfamily. FMN serves as cofactor.

It carries out the reaction 5,6-dihydrouridine(16) in tRNA + NADP(+) = uridine(16) in tRNA + NADPH + H(+). The enzyme catalyses 5,6-dihydrouridine(16) in tRNA + NAD(+) = uridine(16) in tRNA + NADH + H(+). Its function is as follows. Catalyzes the synthesis of 5,6-dihydrouridine (D), a modified base found in the D-loop of most tRNAs, via the reduction of the C5-C6 double bond in target uridines. Specifically modifies U16 in tRNAs. This chain is tRNA-dihydrouridine(16) synthase, found in Pasteurella multocida (strain Pm70).